A 630-amino-acid polypeptide reads, in one-letter code: Plastin-3 (630 aa).

EF-hand domains follow at residues 12–47 and 52–87; these read DELD…ANMP and KVRE…VKSS. 9 residues coordinate Ca(2+): Asp25, Asn27, Asn29, Glu36, Asp65, Asn67, Asp69, Lys71, and Glu76. 2 actin-binding regions span residues 109-382 and 383-627; these read TSEL…ALTK and PENQ…GRGM. 2 Calponin-homology (CH) domains span residues 123–239 and 267–378; these read EEEK…KIGL and LSPE…NKYP. Phosphoserine is present on residues Ser268, Ser293, Ser326, and Ser339. Phosphothreonine is present on Thr391. 2 Calponin-homology (CH) domains span residues 397–506 and 518–627; these read TREE…RRYT and KATD…GRGM.

In terms of assembly, monomer.

It localises to the cytoplasm. In terms of biological role, actin-bundling protein. The polypeptide is Plastin-3 (Pls3) (Rattus norvegicus (Rat)).